Here is a 359-residue protein sequence, read N- to C-terminus: Phosphoribosylformylglycinamidine cyclo-ligase (359 aa).

It belongs to the AIR synthase family.

The protein resides in the cytoplasm. The enzyme catalyses 2-formamido-N(1)-(5-O-phospho-beta-D-ribosyl)acetamidine + ATP = 5-amino-1-(5-phospho-beta-D-ribosyl)imidazole + ADP + phosphate + H(+). The protein operates within purine metabolism; IMP biosynthesis via de novo pathway; 5-amino-1-(5-phospho-D-ribosyl)imidazole from N(2)-formyl-N(1)-(5-phospho-D-ribosyl)glycinamide: step 2/2. The protein is Phosphoribosylformylglycinamidine cyclo-ligase of Brucella melitensis biotype 2 (strain ATCC 23457).